A 543-amino-acid chain; its full sequence is EH domain-containing protein 2 (543 aa).

Phosphoserine occurs at positions 3 and 44. The Dynamin-type G domain maps to 55–286 (FDGKPMVLVA…DLFRDIQGLP (232 aa)). The G1 motif stretch occupies residues 65-72 (GQYSTGKT). ATP is bound at residue 65-72 (GQYSTGKT). The tract at residues 91 to 92 (EP) is G2 motif. The G3 motif stretch occupies residues 153 to 156 (DTPG). The segment at 219–222 (NKAD) is G4 motif. Lys220 is an ATP binding site. Val243 is a region of interest (G5 motif). Trp258 provides a ligand contact to ATP. The segment at 320–340 (TVFGKENKKKQLILKLPVIFA) is mediates membrane-binding. Residues Ser438, Ser468, Ser470, Ser484, and Ser493 each carry the phosphoserine modification. In terms of domain architecture, EH spans 449–537 (DKSKYDEIFY…RRLVPPSKRR (89 aa)). The 36-residue stretch at 481–516 (LPNSVLGRIWKLSDVDRDGMLDDEEFALASHLIEAK) folds into the EF-hand domain. Residues Asp494, Asp496, Asp498, Met500, and Glu505 each contribute to the Ca(2+) site. The tract at residues 521 to 543 (GLPTNLPRRLVPPSKRRQKGSAE) is disordered. The segment covering 534–543 (SKRRQKGSAE) has biased composition (basic residues).

It belongs to the TRAFAC class dynamin-like GTPase superfamily. Dynamin/Fzo/YdjA family. EHD subfamily. Homodimer and homooligomer. Interacts with EHD1. May also interact with EHD3 and EHD4. Interacts with MYOF. Interacts with EHBP1. Interacts with FER1L5 (via second C2 domain). Interacts with CAV1 in a cholesterol-dependent manner. Interacts (via EH domain) with PACSIN2 (via NPF motifs); this interaction probably stabilizes the caveolae. In terms of tissue distribution, detected in lung and adipocytes. Detected at lower levels in heart and skeletal muscle.

It localises to the cell membrane. The protein resides in the membrane. The protein localises to the caveola. It is found in the endosome membrane. Its subcellular location is the cytoplasm. It localises to the cytosol. The very low intrinsic ATPase activity is increased upon interaction with liposomes. Functionally, ATP- and membrane-binding protein that controls membrane reorganization/tubulation upon ATP hydrolysis. Plays a role in membrane trafficking between the plasma membrane and endosomes. Important for the internalization of GLUT4. Required for fusion of myoblasts to skeletal muscle myotubes. Required for normal translocation of FER1L5 to the plasma membrane. Regulates the equilibrium between cell surface-associated and cell surface-dissociated caveolae by constraining caveolae at the cell membrane. This Mus musculus (Mouse) protein is EH domain-containing protein 2.